The following is a 149-amino-acid chain: Alpha-crystallin A chain (149 aa).

Positions 41–149 (LFRSVLESGI…DPTHSERPIP (109 aa)) constitute a sHSP domain. Residues histidine 89, glutamate 91, histidine 96, and histidine 143 each coordinate Zn(2+).

Belongs to the small heat shock protein (HSP20) family. Heteropolymer composed of three CRYAA and one CRYAB subunits. Inter-subunit bridging via zinc ions enhances stability, which is crucial as there is no protein turn over in the lens. Can also form homodimers and homotetramers (dimers of dimers) which serve as the building blocks of homooligomers. Within homooligomers, the zinc-binding motif is created from residues of 3 different molecules. His-89 and Glu-91 from one molecule are ligands of the zinc ion, and His-96 and His-143 residues from additional molecules complete the site with tetrahedral coordination geometry.

Its subcellular location is the cytoplasm. The protein localises to the nucleus. Functionally, contributes to the transparency and refractive index of the lens. May act as a chaperone, preventing aggregation of various proteins under a wide range of stress conditions. The polypeptide is Alpha-crystallin A chain (CRYAA) (Anas platyrhynchos (Mallard)).